We begin with the raw amino-acid sequence, 652 residues long: MALVTVSRSPPASGHSTPVGPTDRVIRRRGRLQRRQSFAVLRGAVLGLQDGGEGNDAAEADPEPMEKPSGEEQPAEDQTDNGQGSQSPWKQVQKRHLHLMVELLRPQDDIRLAAQLEAARPPRLRYLLVVSTGEGLSEEETILLGVDFPDSSSHSCTLGLVLPLWSDTQVYLDGDGGFSVTSGGQSRIFKPVSIQTMWATLQVLHQACEVALGSGLVPGGSALAWATHYQEKLNSDQGCLNEWMAMSDLESFRPPNAEPGQASEQEQMEQAILAELWQVLDASDLDSVTSKEIRQALELRLGCPLQQYRDFIDNQMLLLMAQQDRASRIFPHLYLGSEWNAANLEELQRNRVSHILNMAREIDNFFPERFTYHNVRVWDEESAQLLPHWKETHRFIEDARAQGTRVLVHCKMGVSRSAATVLAYAMKQYGWGLEQALIHVQELRPIVRPNPGFLRQLQTYQGILTASRQSHVWEQKVGVVSPEEPLAPEVSTPLPPLPPEPGGSGEGMVMGQKGSQETPKEELGLRPRINLRGVMRSISLLEPSSEPESTTEAGDLPEVFSSDEEPLHPFSQLSRAKGGQRVCKGPWPALKSRQSVVALHSAALVASRARAFQGQGQGQGQEQRETGTSSTPRLRKVIRQASVDDSREEGKA.

Polar residues predominate over residues methionine 1–serine 16. The tract at residues methionine 1–arginine 31 is disordered. Alanine 2 is subject to N-acetylalanine. Phosphoserine is present on residues serine 9, serine 37, serine 85, and serine 87. A disordered region spans residues glycine 43–glutamine 91. The span at aspartate 80–lysine 90 shows a compositional bias: polar residues. In terms of domain architecture, DEK-C spans glutamate 266–alanine 321. The Tyrosine-protein phosphatase domain occupies arginine 325–alanine 466. Cysteine 410 (phosphocysteine intermediate) is an active-site residue. 3 disordered regions span residues glutamate 484–arginine 526, leucine 540–glutamine 580, and arginine 610–alanine 652. Residues leucine 540–glutamate 552 are compositionally biased toward low complexity. The span at serine 642–alanine 652 shows a compositional bias: basic and acidic residues.

This sequence belongs to the protein-tyrosine phosphatase family. As to quaternary structure, does not bind to, or colocalize with, filamentous actin.

Its subcellular location is the cytoplasm. The protein resides in the cytoskeleton. It is found in the nucleus. The catalysed reaction is O-phospho-L-tyrosyl-[protein] + H2O = L-tyrosyl-[protein] + phosphate. It catalyses the reaction O-phospho-L-seryl-[protein] + H2O = L-seryl-[protein] + phosphate. The enzyme catalyses O-phospho-L-threonyl-[protein] + H2O = L-threonyl-[protein] + phosphate. Functionally, protein phosphatase which may play a role in the regulation of actin filament dynamics. Can dephosphorylate and activate the actin binding/depolymerizing factor cofilin, which subsequently binds to actin filaments and stimulates their disassembly. This Rattus norvegicus (Rat) protein is Protein phosphatase Slingshot homolog 3 (Ssh3).